The following is a 746-amino-acid chain: Alpha-1,4-glucan:maltose-1-phosphate maltosyltransferase (746 aa).

The segment at 1 to 43 (MAAVQHRATTRTSNTDNSTTKTKSKATSARKSPATKRKRVSAE) is disordered. The segment covering 10 to 32 (TRTSNTDNSTTKTKSKATSARKS) has biased composition (low complexity). The alpha-maltose 1-phosphate site is built by K343, Q403, and D438. D473 functions as the Nucleophile in the catalytic mechanism. N474 contributes to the alpha-maltose 1-phosphate binding site. E502 serves as the catalytic Proton donor. Residue 612 to 613 (KY) participates in alpha-maltose 1-phosphate binding.

Belongs to the glycosyl hydrolase 13 family. GlgE subfamily. As to quaternary structure, homodimer.

It catalyses the reaction alpha-maltose 1-phosphate + [(1-&gt;4)-alpha-D-glucosyl](n) = [(1-&gt;4)-alpha-D-glucosyl](n+2) + phosphate. In terms of biological role, maltosyltransferase that uses maltose 1-phosphate (M1P) as the sugar donor to elongate linear or branched alpha-(1-&gt;4)-glucans. Is involved in a branched alpha-glucan biosynthetic pathway from trehalose, together with TreS, Mak and GlgB. This Bifidobacterium longum (strain NCC 2705) protein is Alpha-1,4-glucan:maltose-1-phosphate maltosyltransferase.